The following is a 376-amino-acid chain: Flap endonuclease 1 (376 aa).

The N-domain stretch occupies residues 1-105; the sequence is MGIKGLSKLL…GELNKRKENA (105 aa). D34 lines the Mg(2+) pocket. Residues R47 and R71 each contribute to the DNA site. Residues D87, E159, E161, D180, and D182 each coordinate Mg(2+). The I-domain stretch occupies residues 123–254; it reads QAKKLMKRTA…ITAFELIQQY (132 aa). Residue E159 coordinates DNA. 2 residues coordinate DNA: G232 and D234. D234 lines the Mg(2+) pocket. The interaction with PCNA stretch occupies residues 336 to 344; it reads AQGRLDSFF. A disordered region spans residues 352-376; sequence SKSEAASGVKRKKPTTKAKESRKKK. Residues 360–376 are compositionally biased toward basic residues; the sequence is VKRKKPTTKAKESRKKK.

It belongs to the XPG/RAD2 endonuclease family. FEN1 subfamily. In terms of assembly, interacts with PCNA. Three molecules of FEN1 bind to one PCNA trimer with each molecule binding to one PCNA monomer. PCNA stimulates the nuclease activity without altering cleavage specificity. Mg(2+) serves as cofactor. Phosphorylated. Phosphorylation upon DNA damage induces relocalization to the nuclear plasma.

It is found in the nucleus. The protein localises to the nucleolus. The protein resides in the nucleoplasm. Its subcellular location is the mitochondrion. Functionally, structure-specific nuclease with 5'-flap endonuclease and 5'-3' exonuclease activities involved in DNA replication and repair. During DNA replication, cleaves the 5'-overhanging flap structure that is generated by displacement synthesis when DNA polymerase encounters the 5'-end of a downstream Okazaki fragment. It enters the flap from the 5'-end and then tracks to cleave the flap base, leaving a nick for ligation. Also involved in the long patch base excision repair (LP-BER) pathway, by cleaving within the apurinic/apyrimidinic (AP) site-terminated flap. Acts as a genome stabilization factor that prevents flaps from equilibrating into structures that lead to duplications and deletions. Also possesses 5'-3' exonuclease activity on nicked or gapped double-stranded DNA, and exhibits RNase H activity. Also involved in replication and repair of rDNA and in repairing mitochondrial DNA. This Entamoeba dispar (strain ATCC PRA-260 / SAW760) protein is Flap endonuclease 1.